A 119-amino-acid chain; its full sequence is MGQNDKAARRQKIKLRSKTRGQGTAASPRLCVFRSVSQIYAQLVDDVNGATLLAVSSMAKENKELKGTKTEVSHTIGKQIGEKALAQGITKVIFDRNGFRYHGRVKALAEGAREAGLVF.

A disordered region spans residues 1–26 (MGQNDKAARRQKIKLRSKTRGQGTAA). The span at 9 to 19 (RRQKIKLRSKT) shows a compositional bias: basic residues.

Belongs to the universal ribosomal protein uL18 family. In terms of assembly, part of the 50S ribosomal subunit; part of the 5S rRNA/L5/L18/L25 subcomplex. Contacts the 5S and 23S rRNAs.

This is one of the proteins that bind and probably mediate the attachment of the 5S RNA into the large ribosomal subunit, where it forms part of the central protuberance. This chain is Large ribosomal subunit protein uL18, found in Prosthecochloris aestuarii (strain DSM 271 / SK 413).